We begin with the raw amino-acid sequence, 1923 residues long: Endoribonuclease Dicer (1923 aa).

In terms of domain architecture, Helicase ATP-binding spans 51–227 (LLEAALDHNT…ELEEKIQKLE (177 aa)). Residue 64-71 (LNTGSGKT) participates in ATP binding. Residues 175 to 178 (DECH) carry the DECH box motif. Residues 256-595 (DCGPFTDRSG…LRNKCSKSVD (340 aa)) form a required for interaction with PRKRA and TARBP2 region. Residues 410-433 (VSWSDSEDDEEDEEIEEKEKPETN) are disordered. Ser413 and Ser415 each carry phosphoserine. Acidic residues predominate over residues 414–425 (DSEDDEEDEEIE). The 170-residue stretch at 433 to 602 (NFPSPFTNIL…SVDTGEADTE (170 aa)) folds into the Helicase C-terminal domain. The Dicer dsRNA-binding fold domain occupies 629–721 (AIGHVNRYCA…MPVGKETVKY (93 aa)). A PAZ domain is found at 894 to 1041 (KFMEDIEKSE…LVPELCAIHP (148 aa)). Residues Ser1015 and Ser1160 each carry the phosphoserine modification. Polar residues-rich tracts occupy residues 1246 to 1255 (NANTSTSDGS) and 1277 to 1290 (SEQS…SRTL). The disordered stretch occupies residues 1246–1291 (NANTSTSDGSPVTAAVPGTTETGEAPPDRTASEQSPSPGYSSRTLG). Positions 1276 to 1404 (ASEQSPSPGY…TEKWEKDEMT (129 aa)) constitute an RNase III 1 domain. Mg(2+) is bound by residues Glu1316, Glu1396, and Glu1399. A phosphoserine mark is found at Ser1461, Ser1469, and Ser1471. The 159-residue stretch at 1667 to 1825 (FENFEKKINY…LAGAIYMDSG (159 aa)) folds into the RNase III 2 domain. Mg(2+) is bound by residues Glu1706, Asp1811, and Glu1814. One can recognise a DRBM domain in the interval 1853-1915 (SPVRELLEME…ARRALRSLKA (63 aa)). Ser1869 carries the post-translational modification Phosphoserine.

It belongs to the helicase family. Dicer subfamily. Component of the RISC loading complex (RLC), or micro-RNA (miRNA) loading complex (miRLC), which is composed of DICER1, AGO2 and TARBP2; DICER1 and TARBP2 are required to process precursor miRNAs (pre-miRNAs) to mature miRNAs and then load them onto AGO2. Note that the trimeric RLC/miRLC is also referred to as RISC. Interacts with DHX9, AGO1, PIWIL1 and PRKRA. Interacts with AGO2, TARBP2, EIF6, MOV10 and RPL7A (60S ribosome subunit); they form a large RNA-induced silencing complex (RISC). Interacts with BCDIN3D. Interacts (via Dicer dsRNA-binding fold domain) with ALOX5 (via PLAT domain); this interaction enhances arachidonate 5-lipoxygenase activity and modifies the miRNA precursor processing activity of DICER1. Mg(2+) serves as cofactor. Requires Mn(2+) as cofactor.

It localises to the cytoplasm. It catalyses the reaction Endonucleolytic cleavage to 5'-phosphomonoester.. Double-stranded RNA (dsRNA) endoribonuclease playing a central role in short dsRNA-mediated post-transcriptional gene silencing. Cleaves naturally occurring long dsRNAs and short hairpin pre-microRNAs (miRNA) into fragments of twenty-one to twenty-three nucleotides with 3' overhang of two nucleotides, producing respectively short interfering RNAs (siRNA) and mature microRNAs. SiRNAs and miRNAs serve as guide to direct the RNA-induced silencing complex (RISC) to complementary RNAs to degrade them or prevent their translation. Gene silencing mediated by siRNAs, also called RNA interference, controls the elimination of transcripts from mobile and repetitive DNA elements of the genome but also the degradation of exogenous RNA of viral origin for instance. The miRNA pathway on the other side is a mean to specifically regulate the expression of target genes. The polypeptide is Endoribonuclease Dicer (DICER1) (Bos taurus (Bovine)).